A 242-amino-acid chain; its full sequence is 2-amino-5-formylamino-6-ribosylaminopyrimidin-4(3H)-one 5'-monophosphate deformylase (242 aa).

E46, H48, D57, and H125 together coordinate Fe cation.

It belongs to the creatininase superfamily. FAPy deformylase family. As to quaternary structure, homodimer. Fe(2+) serves as cofactor. Requires Zn(2+) as cofactor.

It carries out the reaction 2-amino-5-formylamino-6-(5-phospho-D-ribosylamino)pyrimidin-4(3H)-one + H2O = 2,5-diamino-6-(1-D-ribosylamino)pyrimidin-4(3H)-one 5'-phosphate + formate + H(+). It participates in cofactor biosynthesis; coenzyme F420 biosynthesis. The protein operates within cofactor biosynthesis; riboflavin biosynthesis. Functionally, catalyzes the hydrolysis of the formamide of 2-amino-5-formylamino-6-ribosylamino-4(3H)-pyrimidinone 5'-monophosphate (FAPy) to form 2,5-diamino-6-ribosylamino-4(3H)-pyrimidinone 5'-phosphate (APy). The sequence is that of 2-amino-5-formylamino-6-ribosylaminopyrimidin-4(3H)-one 5'-monophosphate deformylase from Methanococcus aeolicus (strain ATCC BAA-1280 / DSM 17508 / OCM 812 / Nankai-3).